The following is a 4749-amino-acid chain: E3 ubiquitin-protein ligase MYCBP2 (4749 aa).

3 disordered regions span residues 87-127 (DRDQ…RSKS), 170-192 (AASK…SREP), and 609-628 (ASKG…KPYK). Residues 100–124 (SRNKKILNKKKLKRKQKSKSKVKTR) are compositionally biased toward basic residues. Phosphoserine is present on residues serine 127, serine 178, serine 181, and serine 183. 5 RCC1 repeats span residues 600 to 655 (DGSV…VISK), 699 to 755 (NGEV…MMCP), 907 to 957 (KRDK…VLME), 958 to 1009 (NGDV…LLMD), and 1011 to 1066 (QVFT…LRID). Basic residues predominate over residues 899-910 (SHPAQLKHKRDK). The segment at 899–928 (SHPAQLKHKRDKHKDGSGDRGEKDASKITT) is disordered. The segment covering 911–924 (HKDGSGDRGEKDAS) has biased composition (basic and acidic residues). The segment at 1235 to 1386 (NRFESHGGGW…GQIPQLLYRL (152 aa)) is PHR domain 1. Phosphoserine is present on serine 1621. Residues 1723–1881 (NRFTKTSQGR…GQIPQILYYR (159 aa)) are PHR domain 2. A disulfide bond links cysteine 1745 and cysteine 1860. The RAE1 binding stretch occupies residues 2018-2544 (AVIESEHPYK…FNQHLGKSLL (527 aa)). Disordered regions lie at residues 2313–2336 (KKTS…SAAA) and 2780–3084 (QQRQ…KGDG). One copy of the Filamin repeat lies at 2331 to 2438 (SPSAAASSAD…IDAGLEVKVK (108 aa)). Residues 2780-2803 (QQRQLQSDRGTISTSSRPVSTSGK) are compositionally biased toward polar residues. Residues 2814–2832 (VKPDGHVSRTPADQKKPRG) show a composition bias toward basic and acidic residues. The residue at position 2841 (serine 2841) is a Phosphoserine. The span at 2847–2857 (DAAKLRSDSHS) shows a compositional bias: basic and acidic residues. Polar residues predominate over residues 2858–2879 (RSLSPNHNTLQTLKSDGRTSSG). Serine 2859 and serine 2861 each carry phosphoserine. 2 stretches are compositionally biased toward low complexity: residues 2884–2894 (SPGPGSRSSSP) and 2904–2917 (SSPS…SSSP). Serine 2905 and serine 2911 each carry phosphoserine. Polar residues predominate over residues 2918–2929 (QDKNLPQKSTAP). A compositionally biased stretch (basic and acidic residues) spans 2932–2943 (TKLDPPRERSKS). Phosphoserine occurs at positions 2941, 2943, and 2992. Positions 3008-3021 (CTSSTLKTNGVTDS) are enriched in polar residues. 2 stretches are compositionally biased toward basic and acidic residues: residues 3027–3037 (GDLKSVDEGSN) and 3047–3056 (PLKDEQEMRA). Serine 3057 is subject to Phosphoserine. Over residues 3060-3073 (ISRKCANRHTRPKK) the composition is skewed to basic residues. Serine 3162, serine 3550, and serine 3577 each carry phosphoserine. The interval 3677-3700 (VEAEEDEDEDNKSNKENAEQEKDT) is disordered. Positions 3687 to 3700 (NKSNKENAEQEKDT) are enriched in basic and acidic residues. The 179-residue stretch at 3789 to 3967 (FSISVQSGFE…SVAQQRSCEA (179 aa)) folds into the DOC domain. The disordered stretch occupies residues 3986–4007 (SGDAEPTPEQEEKALLSSPEGE). A Phosphothreonine modification is found at threonine 3992. Serine 4002 and serine 4003 each carry phosphoserine. Positions 4499, 4502, 4517, 4519, 4522, 4525, 4546, 4549, 4615, and 4618 each coordinate Zn(2+). The segment at 4499–4550 (CMICFTEALSAAPAIQLDCSHVFHLQCCRRVLENRWLGPRITFGFISCPICK) adopts an RING-type; atypical zinc-finger fold. Residues 4610 to 4747 (YAYYVCYKCR…LGCGVCRNAH (138 aa)) form a tandem cysteine domain region. Cysteine 4629 is an active-site residue. The Zn(2+) site is built by cysteine 4646, cysteine 4649, cysteine 4658, histidine 4661, cysteine 4670, cysteine 4673, and cysteine 4674. Cysteine 4681 is a catalytic residue. Zn(2+) is bound by residues cysteine 4688, cysteine 4691, cysteine 4709, cysteine 4723, histidine 4729, cysteine 4740, and cysteine 4743.

This sequence belongs to the RING-Cys relay (RCR) family. Interacts with MYC. Interacts with TSC2 (tuberin) when TSC2 is in complex with TSC1 (hamartin). Interacts with FBXO45. Interacts with RAE1. Interacts with CPNE1 (via VWFA domain) and CPNE4 (via VWFA domain). Interacts with (sumoylated) RANGAP1; interaction with sumoylated RANGAP1 inhibits E3 ubiquitin-protein ligase activity and promotes MYCBP2 translocation to the nucleus. Interacts with RAN. Interacts with ATP13A2; the interaction inhibits the ubiquitination of TSC2 by MYCBP2. Interacts with USP11. Post-translationally, autoubiquitinated. In terms of tissue distribution, expression is mostly restricted to the nervous system, including expression in motor and sensory axons. During postnatal development, expression is particularly strong in the cerebellum, hippocampus and retina. Lower levels of expression are observed throughout the cerebral cortex.

It localises to the nucleus. The protein localises to the cell projection. The protein resides in the axon. Its subcellular location is the cytoplasm. It is found in the cytoskeleton. The enzyme catalyses [E2 ubiquitin-conjugating enzyme]-S-ubiquitinyl-L-cysteine + [acceptor protein]-L-threonine = [E2 ubiquitin-conjugating enzyme]-L-cysteine + [acceptor protein]-3-O-ubiquitinyl-L-threonine.. Its pathway is protein modification; protein ubiquitination. Functionally, atypical E3 ubiquitin-protein ligase which specifically mediates ubiquitination of threonine and serine residues on target proteins, instead of ubiquitinating lysine residues. Shows esterification activity towards both threonine and serine, with a preference for threonine, and acts via two essential catalytic cysteine residues that relay ubiquitin to its substrate via thioester intermediates. Interacts with the E2 enzymes UBE2D1, UBE2D3, UBE2E1 and UBE2L3. Plays a key role in neural development, probably by mediating ubiquitination of threonine residues on target proteins. Involved in different processes such as regulation of neurite outgrowth, synaptic growth, synaptogenesis and axon degeneration. Required for the formation of major central nervous system axon tracts. Required for proper axon growth by regulating axon navigation and axon branching: acts by regulating the subcellular location and stability of MAP3K12/DLK. Required for proper localization of retinogeniculate projections but not for eye-specific segregation. Regulates axon guidance in the olfactory system. Involved in Wallerian axon degeneration, an evolutionarily conserved process that drives the loss of damaged axons: acts by promoting destabilization of NMNAT2, probably via ubiquitination of NMNAT2. Catalyzes ubiquitination of threonine and/or serine residues on NMNAT2, consequences of threonine and/or serine ubiquitination are however unknown. Regulates the internalization of TRPV1 in peripheral sensory neurons. May mediate ubiquitination and subsequent proteasomal degradation of TSC2/tuberin. Independently of the E3 ubiquitin-protein ligase activity, also acts as a guanosine exchange factor (GEF) for RAN in neurons of dorsal root ganglia. May function as a facilitator or regulator of transcriptional activation by MYC. Acts in concert with HUWE1 to regulate the circadian clock gene expression by promoting the lithium-induced ubiquination and degradation of NR1D1. The chain is E3 ubiquitin-protein ligase MYCBP2 from Mus musculus (Mouse).